A 612-amino-acid polypeptide reads, in one-letter code: Proline-rich protein 14 (612 aa).

Met1 is subject to N-acetylmethionine. Composition is skewed to polar residues over residues 1–15 (MDLPGNSSPFTQPSL) and 86–96 (VCTQSPALPSQ). Disordered regions lie at residues 1-48 (MDLP…EKAS), 65-96 (VPLTHKEDTPSPLTHNHHQDPVCTQSPALPSQ), 119-150 (RARQSSPALRMRSRAASGPEESPSKKTDQVPQ), and 206-256 (PTLT…PALE). A sufficient for heterochromatin association in interphase and chromatin association in anaphase region spans residues 1–135 (MDLPGNSSPF…ALRMRSRAAS (135 aa)). Residues 85 to 405 (PVCTQSPALP…MARTPPPPRP (321 aa)) are required for the interaction with GRB2 and sufficient to promote the phosphorylation of AKT and cell proliferation. The interval 136 to 392 (GPEESPSKKT…QSRPRRHTVG (257 aa)) is required for nuclear lamina association. Residues 243–252 (ADPPESPVPD) show a composition bias toward pro residues. Ser307 is subject to Phosphoserine. Disordered stretches follow at residues 323 to 405 (QSRA…PPRP), 444 to 463 (LGSTKGKELRASKDKVFSDP), and 553 to 583 (DSSLPRSRRPSRGVRTAASRTLTPNLAPSQD). A compositionally biased stretch (polar residues) spans 342–359 (WRTQCNSLAPVSKSSLGR). Over residues 366–379 (LGPPDPGSWPPVPS) the composition is skewed to pro residues. Residues 448 to 463 (KGKELRASKDKVFSDP) show a composition bias toward basic and acidic residues. The tract at residues 546–563 (RRAVEFRDSSLPRSRRPS) is required for nuclear localization. The segment covering 570 to 583 (ASRTLTPNLAPSQD) has biased composition (polar residues).

Interacts (via proline-rich region) with GRB2 (via SH3 domain 2). Interacts (via N-terminus) with CBX5.

The protein resides in the chromosome. It is found in the nucleus. The protein localises to the nucleus lamina. It localises to the nucleoplasm. In terms of biological role, functions in tethering peripheral heterochromatin to the nuclear lamina during interphase, possibly through the interaction with heterochromatin protein CBX5/HP1 alpha. Might play a role in reattaching heterochromatin to the nuclear lamina at mitotic exit. Promotes myoblast differentiation during skeletal myogenesis, possibly by stimulating transcription factor MyoD activity via binding to CBX5/HP1 alpha. Involved in the positive regulation of the PI3K-Akt-mTOR signaling pathway and in promoting cell proliferation, possibly via binding to GRB2. The polypeptide is Proline-rich protein 14 (Prr14) (Mus musculus (Mouse)).